We begin with the raw amino-acid sequence, 1398 residues long: Protein timeless (1398 aa).

The tract at residues 237–268 (VSTLQKLLSLWFEASLSESSEDNESNTSPPKQ) is necessary for normal circadian rhythm. 5 disordered regions span residues 254-300 (ESSE…GGMR), 322-452 (ARVP…QKFN), 478-555 (TKGK…LRRK), 1127-1147 (TASSPSRYHHTGPRNSLSSVS), and 1220-1239 (NHRTGPSGDPSDCIGSSSTT). Positions 273 to 290 (SSPMLTSDPTSDSSDNGS) are enriched in low complexity. Over residues 291-300 (NGRGMGGGMR) the composition is skewed to gly residues. Polar residues predominate over residues 338 to 355 (MTGNDSEQPGSPEQSQPA). Positions 365 to 375 (EDQRHRQLNEH) are enriched in basic and acidic residues. Over residues 376-390 (GEEDEDEDEVEEEEY) the composition is skewed to acidic residues. Composition is skewed to polar residues over residues 400–421 (LNLTQQPADKVNNTTNPTSSAP), 440–452 (ASTSAHAQMQKFN), and 504–515 (QVENQESISTSS). Residues 522–531 (QGKPQHQKPP) show a composition bias toward low complexity. Positions 550-560 (KELRRKKLVKR) match the Nuclear localization signal motif.

Belongs to the timeless family. As to quaternary structure, forms a heterodimer with period (PER); the complex then translocates into the nucleus. Post-translationally, phosphorylated with a circadian rhythmicity. As to expression, expressed in head, photoreceptors, lateral neurons and glial cells in the lamina and medulla of the optic lobes. Expression follows a light-dark cycle, levels show a significant decrease at the end of the night and then remain low throughout the light period (at protein level).

It localises to the nucleus. It is found in the cytoplasm. Its subcellular location is the perinuclear region. Its function is as follows. Required for the production of circadian rhythms. The biological cycle depends on the rhythmic formation and nuclear localization of the TIM-PER complex. Light induces the degradation of TIM, which promotes elimination of PER. Nuclear activity of the heterodimer coordinatively regulates PER and TIM transcription through a negative feedback loop. Behaves as a negative element in circadian transcriptional loop. Does not appear to bind DNA, suggesting indirect transcriptional inhibition. The protein is Protein timeless (tim) of Drosophila melanogaster (Fruit fly).